A 179-amino-acid polypeptide reads, in one-letter code: Large ribosomal subunit protein uL5 (179 aa).

This sequence belongs to the universal ribosomal protein uL5 family. In terms of assembly, part of the 50S ribosomal subunit; part of the 5S rRNA/L5/L18/L25 subcomplex. Contacts the 5S rRNA and the P site tRNA. Forms a bridge to the 30S subunit in the 70S ribosome.

In terms of biological role, this is one of the proteins that bind and probably mediate the attachment of the 5S RNA into the large ribosomal subunit, where it forms part of the central protuberance. In the 70S ribosome it contacts protein S13 of the 30S subunit (bridge B1b), connecting the 2 subunits; this bridge is implicated in subunit movement. Contacts the P site tRNA; the 5S rRNA and some of its associated proteins might help stabilize positioning of ribosome-bound tRNAs. This is Large ribosomal subunit protein uL5 from Neisseria gonorrhoeae (strain ATCC 700825 / FA 1090).